A 293-amino-acid chain; its full sequence is Bifunctional protein FolD (293 aa).

Residues 165–167 (GRS), Ser190, and Ile231 each bind NADP(+).

The protein belongs to the tetrahydrofolate dehydrogenase/cyclohydrolase family. As to quaternary structure, homodimer.

It catalyses the reaction (6R)-5,10-methylene-5,6,7,8-tetrahydrofolate + NADP(+) = (6R)-5,10-methenyltetrahydrofolate + NADPH. The enzyme catalyses (6R)-5,10-methenyltetrahydrofolate + H2O = (6R)-10-formyltetrahydrofolate + H(+). The protein operates within one-carbon metabolism; tetrahydrofolate interconversion. Catalyzes the oxidation of 5,10-methylenetetrahydrofolate to 5,10-methenyltetrahydrofolate and then the hydrolysis of 5,10-methenyltetrahydrofolate to 10-formyltetrahydrofolate. The protein is Bifunctional protein FolD of Synechococcus sp. (strain WH7803).